The sequence spans 264 residues: MRIALGISYSGSAYEGWQSQLSGNTVQDKLESALARFAAQPVRTLCAGRTDAGVHGLMQVVHFDTVLHRDMGSWVRGTNAFLPSDIAVQWAREVPDTFHCRGSAIARRYAYVVLESPVRPSVEAGRVGWVYRPLDGAAMRQAITHLVGEHDFSSFRAAQCQAKSPVKTINRIEISERAGTGSKYWHFEFEANAFLHHMIRNIMGCLVAIGQGSHEPGWLLDVMAARSRDAAAPTFSPNGLYFLGPVYEDHYGLPNRTAAYDWLP.

Asp51 serves as the catalytic Nucleophile. A substrate-binding site is contributed by Tyr109.

It belongs to the tRNA pseudouridine synthase TruA family. In terms of assembly, homodimer.

It carries out the reaction uridine(38/39/40) in tRNA = pseudouridine(38/39/40) in tRNA. In terms of biological role, formation of pseudouridine at positions 38, 39 and 40 in the anticodon stem and loop of transfer RNAs. This is tRNA pseudouridine synthase A from Polaromonas sp. (strain JS666 / ATCC BAA-500).